The chain runs to 411 residues: Glutamate dehydrogenase 2 (411 aa).

Lys102 is an active-site residue.

Belongs to the Glu/Leu/Phe/Val dehydrogenases family.

The protein resides in the mitochondrion. It carries out the reaction L-glutamate + NAD(+) + H2O = 2-oxoglutarate + NH4(+) + NADH + H(+). It catalyses the reaction L-glutamate + NADP(+) + H2O = 2-oxoglutarate + NH4(+) + NADPH + H(+). The sequence is that of Glutamate dehydrogenase 2 (GDH2) from Arabidopsis thaliana (Mouse-ear cress).